The chain runs to 287 residues: Ketoacyl reductase HetN (287 aa).

11 to 35 (LTGASRGLGVYIARALAKEQATVVC) contributes to the NAD(+) binding site. Residue serine 142 coordinates substrate. The active-site Proton acceptor is the tyrosine 155.

The protein belongs to the short-chain dehydrogenases/reductases (SDR) family.

Functionally, may be involved in repressing heterocyst differentiation and may be essential for preventing all vegetative cells from differentiating. This is Ketoacyl reductase HetN (hetN) from Nostoc sp. (strain PCC 7120 / SAG 25.82 / UTEX 2576).